The following is a 247-amino-acid chain: Carboxy-S-adenosyl-L-methionine synthase (247 aa).

Residues Y40, 65–67, 90–91, 122–123, N137, and R204 each bind S-adenosyl-L-methionine; these read GAS, DN, and DI.

It belongs to the class I-like SAM-binding methyltransferase superfamily. Cx-SAM synthase family. Homodimer.

The catalysed reaction is prephenate + S-adenosyl-L-methionine = carboxy-S-adenosyl-L-methionine + 3-phenylpyruvate + H2O. Functionally, catalyzes the conversion of S-adenosyl-L-methionine (SAM) to carboxy-S-adenosyl-L-methionine (Cx-SAM). The chain is Carboxy-S-adenosyl-L-methionine synthase from Pseudomonas entomophila (strain L48).